Reading from the N-terminus, the 121-residue chain is MARISGVEIPNNKRVVVSLTYIYGIGLPTAQSVLKTLNISEDIRVKDLTEEQIKNISMEISKYKTEGKLRREVSLNIKRLMEIGSYRGLRHRKGLPVRGQSSKTNARTVKGPRKTVANKKK.

The segment at 92-121 (RKGLPVRGQSSKTNARTVKGPRKTVANKKK) is disordered. A compositionally biased stretch (basic residues) spans 110 to 121 (KGPRKTVANKKK).

Belongs to the universal ribosomal protein uS13 family. Part of the 30S ribosomal subunit. Forms a loose heterodimer with protein S19. Forms two bridges to the 50S subunit in the 70S ribosome.

Its function is as follows. Located at the top of the head of the 30S subunit, it contacts several helices of the 16S rRNA. In the 70S ribosome it contacts the 23S rRNA (bridge B1a) and protein L5 of the 50S subunit (bridge B1b), connecting the 2 subunits; these bridges are implicated in subunit movement. Contacts the tRNAs in the A and P-sites. The sequence is that of Small ribosomal subunit protein uS13 from Mycoplasma mycoides subsp. mycoides SC (strain CCUG 32753 / NCTC 10114 / PG1).